Consider the following 95-residue polypeptide: uncharacterized protein (95 aa).

A helical transmembrane segment spans residues 12 to 32 (IASLVVSVVVLLIGLILWFFI).

It is found in the cell membrane. This is an uncharacterized protein from Escherichia coli O6:H1 (strain CFT073 / ATCC 700928 / UPEC).